Consider the following 354-residue polypeptide: Eukaryotic translation initiation factor 3 subunit H (354 aa).

Positions Met-1–Ser-28 are disordered. The segment covering Gln-19–Ser-28 has biased composition (polar residues). The region spanning Val-33–Ala-174 is the MPN domain.

The protein belongs to the eIF-3 subunit H family. Component of the eukaryotic translation initiation factor 3 (eIF-3) complex.

The protein resides in the cytoplasm. Its function is as follows. Component of the eukaryotic translation initiation factor 3 (eIF-3) complex, which is involved in protein synthesis of a specialized repertoire of mRNAs and, together with other initiation factors, stimulates binding of mRNA and methionyl-tRNAi to the 40S ribosome. The eIF-3 complex specifically targets and initiates translation of a subset of mRNAs involved in cell proliferation. This is Eukaryotic translation initiation factor 3 subunit H from Monosiga brevicollis (Choanoflagellate).